The primary structure comprises 380 residues: Succinyl-diaminopimelate desuccinylase (380 aa).

Residue histidine 69 coordinates Zn(2+). Aspartate 71 is a catalytic residue. Aspartate 102 lines the Zn(2+) pocket. Residue glutamate 135 is the Proton acceptor of the active site. Zn(2+)-binding residues include glutamate 136, glutamate 164, and histidine 353.

It belongs to the peptidase M20A family. DapE subfamily. As to quaternary structure, homodimer. It depends on Zn(2+) as a cofactor. The cofactor is Co(2+).

The catalysed reaction is N-succinyl-(2S,6S)-2,6-diaminopimelate + H2O = (2S,6S)-2,6-diaminopimelate + succinate. It participates in amino-acid biosynthesis; L-lysine biosynthesis via DAP pathway; LL-2,6-diaminopimelate from (S)-tetrahydrodipicolinate (succinylase route): step 3/3. Functionally, catalyzes the hydrolysis of N-succinyl-L,L-diaminopimelic acid (SDAP), forming succinate and LL-2,6-diaminopimelate (DAP), an intermediate involved in the bacterial biosynthesis of lysine and meso-diaminopimelic acid, an essential component of bacterial cell walls. This is Succinyl-diaminopimelate desuccinylase from Cereibacter sphaeroides (strain ATCC 17029 / ATH 2.4.9) (Rhodobacter sphaeroides).